Here is a 112-residue protein sequence, read N- to C-terminus: T cell receptor alpha variable 9-1 (112 aa).

The N-terminal stretch at 1-20 (MNSSPGPAIALFLMFGGING) is a signal peptide. The Ig-like domain maps to 21 to 112 (DSVVQTEGQV…DSAVYFCALS (92 aa)). Asn-41 carries an N-linked (GlcNAc...) asparagine glycan. Cys-42 and Cys-109 are disulfide-bonded.

As to quaternary structure, alpha-beta TR is a heterodimer composed of an alpha and beta chain; disulfide-linked. The alpha-beta TR is associated with the transmembrane signaling CD3 coreceptor proteins to form the TR-CD3 (TcR or TCR). The assembly of alpha-beta TR heterodimers with CD3 occurs in the endoplasmic reticulum where a single alpha-beta TR heterodimer associates with one CD3D-CD3E heterodimer, one CD3G-CD3E heterodimer and one CD247 homodimer forming a stable octameric structure. CD3D-CD3E and CD3G-CD3E heterodimers preferentially associate with TR alpha and TR beta chains, respectively. The association of the CD247 homodimer is the last step of TcR assembly in the endoplasmic reticulum and is required for transport to the cell surface.

It localises to the cell membrane. V region of the variable domain of T cell receptor (TR) alpha chain that participates in the antigen recognition. Alpha-beta T cell receptors are antigen specific receptors which are essential to the immune response and are present on the cell surface of T lymphocytes. Recognize peptide-major histocompatibility (MH) (pMH) complexes that are displayed by antigen presenting cells (APC), a prerequisite for efficient T cell adaptive immunity against pathogens. Binding of alpha-beta TR to pMH complex initiates TR-CD3 clustering on the cell surface and intracellular activation of LCK that phosphorylates the ITAM motifs of CD3G, CD3D, CD3E and CD247 enabling the recruitment of ZAP70. In turn ZAP70 phosphorylates LAT, which recruits numerous signaling molecules to form the LAT signalosome. The LAT signalosome propagates signal branching to three major signaling pathways, the calcium, the mitogen-activated protein kinase (MAPK) kinase and the nuclear factor NF-kappa-B (NF-kB) pathways, leading to the mobilization of transcription factors that are critical for gene expression and essential for T cell growth and differentiation. The T cell repertoire is generated in the thymus, by V-(D)-J rearrangement. This repertoire is then shaped by intrathymic selection events to generate a peripheral T cell pool of self-MH restricted, non-autoaggressive T cells. Post-thymic interaction of alpha-beta TR with the pMH complexes shapes TR structural and functional avidity. This Homo sapiens (Human) protein is T cell receptor alpha variable 9-1.